Reading from the N-terminus, the 209-residue chain is Casparian strip membrane protein 1 (209 aa).

Residues 1 to 35 are disordered; sequence MKTGESTAIDIAPETNNSGPIGKKKSTTPLLAAPV. Over 1–46 the chain is Cytoplasmic; the sequence is MKTGESTAIDIAPETNNSGPIGKKKSTTPLLAAPVPDRGTHRMKRG. The chain crosses the membrane as a helical span at residues 47–67; sequence LAIFDFVLRIGVLASALAAAA. At 68 to 96 the chain is on the extracellular side; that stretch reads AMGTSEQTLPFFTQFFQFEASYDDLPTFQ. A helical transmembrane segment spans residues 97 to 117; that stretch reads FFVVAMAVVAGYVVLSIPFSI. Residues 118–129 lie on the Cytoplasmic side of the membrane; sequence VCIIRPHAAGPR. A helical transmembrane segment spans residues 130–150; sequence VLLLILDSVALTLNTAAAGAA. The Extracellular portion of the chain corresponds to 151–182; it reads AAVVSLAHSGNSSTNWLAICNQFGDFCQQASG. N-linked (GlcNAc...) asparagine glycosylation is present at N161. A helical transmembrane segment spans residues 183 to 203; it reads AVVGSFAAVLLFLLLILFSAL. Topologically, residues 204–209 are cytoplasmic; sequence SLKNSH.

This sequence belongs to the Casparian strip membrane proteins (CASP) family. As to quaternary structure, homodimer and heterodimers.

It is found in the cell membrane. Regulates membrane-cell wall junctions and localized cell wall deposition. Required for establishment of the Casparian strip membrane domain (CSD) and the subsequent formation of Casparian strips, a cell wall modification of the root endodermis that determines an apoplastic barrier between the intraorganismal apoplasm and the extraorganismal apoplasm and prevents lateral diffusion. The chain is Casparian strip membrane protein 1 from Cucumis melo (Muskmelon).